A 107-amino-acid polypeptide reads, in one-letter code: U20-lycotoxin-Ls1b (107 aa).

A signal peptide spans 1-30 (MFSTSDQVSKMNSRILSALLILGIATCVIA). Residues 31-76 (GGFCPKSRHPQCNLSYKINDCCAQSDCRVGSVCCVEGCGNVCRAES) enclose the WAP domain. 5 disulfides stabilise this stretch: Cys34/Cys64, Cys42/Cys68, Cys51/Cys63, Cys52/Cys90, and Cys57/Cys72.

This sequence belongs to the venom protein 11 family. 02 (wap-2) subfamily. Contains 5 disulfide bonds. As to expression, expressed by the venom gland.

It localises to the secreted. Functionally, has antibacterial activity. This Lycosa singoriensis (Wolf spider) protein is U20-lycotoxin-Ls1b.